Consider the following 191-residue polypeptide: Peptidyl-tRNA hydrolase (191 aa).

Tyrosine 17 is a tRNA binding site. Histidine 22 functions as the Proton acceptor in the catalytic mechanism. Positions 68, 70, and 116 each coordinate tRNA.

The protein belongs to the PTH family. As to quaternary structure, monomer.

The protein resides in the cytoplasm. The catalysed reaction is an N-acyl-L-alpha-aminoacyl-tRNA + H2O = an N-acyl-L-amino acid + a tRNA + H(+). Its function is as follows. Hydrolyzes ribosome-free peptidyl-tRNAs (with 1 or more amino acids incorporated), which drop off the ribosome during protein synthesis, or as a result of ribosome stalling. Catalyzes the release of premature peptidyl moieties from peptidyl-tRNA molecules trapped in stalled 50S ribosomal subunits, and thus maintains levels of free tRNAs and 50S ribosomes. The sequence is that of Peptidyl-tRNA hydrolase from Mycobacterium ulcerans (strain Agy99).